The following is a 99-amino-acid chain: Malonate decarboxylase acyl carrier protein (99 aa).

An O-(phosphoribosyl dephospho-coenzyme A)serine modification is found at Ser25.

The protein belongs to the MdcC family. Post-translationally, covalently binds the prosthetic group of malonate decarboxylase.

Its subcellular location is the cytoplasm. Its function is as follows. Subunit of malonate decarboxylase, it is an acyl carrier protein to which acetyl and malonyl thioester residues are bound via a 2'-(5''-phosphoribosyl)-3'-dephospho-CoA prosthetic group and turn over during the catalytic mechanism. The polypeptide is Malonate decarboxylase acyl carrier protein (Pseudomonas fluorescens (strain Pf0-1)).